A 612-amino-acid polypeptide reads, in one-letter code: BTB/POZ domain-containing protein 9 (612 aa).

The BTB domain occupies 36-104 (GDVTFVVEKK…IYTGRATLTD (69 aa)). In terms of domain architecture, BACK spans 142 to 240 (VCMTFDVASL…SLTELLNVVR (99 aa)). The interval 560-612 (QSSQKEENSEESGTGDTSLAGQQLDSHALRAPSGSSLPSSPGSNSRSPNRQHQ) is disordered. The span at 573-584 (TGDTSLAGQQLD) shows a compositional bias: polar residues. Residues 588-612 (LRAPSGSSLPSSPGSNSRSPNRQHQ) are compositionally biased toward low complexity.

Detected in the brain (at protein level). Moderately expressed in all specific brain regions examined. Expressed in the dopaminergic neurons of the substantia nigra and A11 neurons. Highly expressed in kidney and moderately expressed in all other adult and fetal tissues.

In Homo sapiens (Human), this protein is BTB/POZ domain-containing protein 9 (BTBD9).